A 725-amino-acid chain; its full sequence is Polyribonucleotide nucleotidyltransferase (725 aa).

Asp487 and Asp493 together coordinate Mg(2+). One can recognise a KH domain in the interval 554 to 613 (PRIETMQIPTDKIREVIGTGGKVIREIVEKTGAKIDIQDTGVIKIASSDAKAIKAAYNWI). The S1 motif domain maps to 623–691 (GMIYDGTVVK…ERGKIRLSMK (69 aa)). Positions 697–725 (TGEDITEKLKAEREADRNRERQARQSAGE) are disordered. Basic and acidic residues predominate over residues 701–719 (ITEKLKAEREADRNRERQA).

Belongs to the polyribonucleotide nucleotidyltransferase family. It depends on Mg(2+) as a cofactor.

It is found in the cytoplasm. It carries out the reaction RNA(n+1) + phosphate = RNA(n) + a ribonucleoside 5'-diphosphate. Functionally, involved in mRNA degradation. Catalyzes the phosphorolysis of single-stranded polyribonucleotides processively in the 3'- to 5'-direction. The chain is Polyribonucleotide nucleotidyltransferase from Methylobacterium nodulans (strain LMG 21967 / CNCM I-2342 / ORS 2060).